Reading from the N-terminus, the 586-residue chain is Arginine--tRNA ligase (586 aa).

A 'HIGH' region motif is present at residues 133 to 143 (ANPTGPLNIVS).

Belongs to the class-I aminoacyl-tRNA synthetase family. In terms of assembly, monomer.

The protein resides in the cytoplasm. It catalyses the reaction tRNA(Arg) + L-arginine + ATP = L-arginyl-tRNA(Arg) + AMP + diphosphate. The protein is Arginine--tRNA ligase of Leptospira interrogans serogroup Icterohaemorrhagiae serovar copenhageni (strain Fiocruz L1-130).